The following is a 365-amino-acid chain: DNA N6-methyl methyltransferase (365 aa).

Belongs to the MT-A70-like family.

It carries out the reaction a 2'-deoxyadenosine in DNA + S-adenosyl-L-methionine = an N(6)-methyl-2'-deoxyadenosine in DNA + S-adenosyl-L-homocysteine + H(+). Its function is as follows. Methylates DNA on the 6th position of adenine (N(6)-methyladenosine). N(6)-methyladenosine (m6A) DNA is involved in epigenetic transgenerational inheritance. In Caenorhabditis elegans, this protein is DNA N6-methyl methyltransferase.